The sequence spans 531 residues: Glucose-6-phosphate exchanger SLC37A1 (531 aa).

The chain crosses the membrane as a helical span at residues 18–38; that stretch reads QWYRAFIFMLTFLLYASFHLS. The interval 53–72 is disordered; that stretch reads CTAGDGPESPFSDPSSSTRH. Transmembrane regions (helical) follow at residues 100–120, 129–149, 157–177, 192–214, 222–242, 332–352, 364–384, 392–412, 419–439, 464–484, and 488–508; these read GALD…SGII, YLTF…LGYF, FYVV…PSVV, IMGI…AGYW, SFIV…LFLI, LCLL…PLYI, GELS…AGVI, ASTC…FSSV, ATIA…ALIT, AIID…AGLI, and GWSN…LFLV.

The protein belongs to the major facilitator superfamily. Organophosphate:Pi antiporter (OPA) (TC 2.A.1.4) family.

The protein localises to the endoplasmic reticulum membrane. It catalyses the reaction D-glucose 6-phosphate(in) + phosphate(out) = D-glucose 6-phosphate(out) + phosphate(in). Its activity is regulated as follows. Inhibited by vanadate but not by chlorogenic acid. Functionally, inorganic phosphate and glucose-6-phosphate antiporter. May transport cytoplasmic glucose-6-phosphate into the lumen of the endoplasmic reticulum and translocate inorganic phosphate into the opposite direction. Independent of a lumenal glucose-6-phosphatase. May not play a role in homeostatic regulation of blood glucose levels. The polypeptide is Glucose-6-phosphate exchanger SLC37A1 (Mus musculus (Mouse)).